Consider the following 445-residue polypeptide: Chromosome partition protein MukF (445 aa).

The segment at 213-241 (LSETSSTLRELQDTLQAASDELQTQILDI) is leucine-zipper.

Belongs to the MukF family. As to quaternary structure, interacts, and probably forms a ternary complex, with MukE and MukB via its C-terminal region. The complex formation is stimulated by calcium or magnesium. It is required for an interaction between MukE and MukB.

Its subcellular location is the cytoplasm. The protein resides in the nucleoid. Functionally, involved in chromosome condensation, segregation and cell cycle progression. May participate in facilitating chromosome segregation by condensation DNA from both sides of a centrally located replisome during cell division. Not required for mini-F plasmid partitioning. Probably acts via its interaction with MukB and MukE. Overexpression results in anucleate cells. It has a calcium binding activity. This is Chromosome partition protein MukF from Vibrio campbellii (strain ATCC BAA-1116).